The primary structure comprises 589 residues: Isocitrate dehydrogenase kinase/phosphatase (589 aa).

ATP is bound by residues 317-323 (AAGIKGM) and Lys-338. The active site involves Asp-373.

The protein belongs to the AceK family.

Its subcellular location is the cytoplasm. The enzyme catalyses L-seryl-[isocitrate dehydrogenase] + ATP = O-phospho-L-seryl-[isocitrate dehydrogenase] + ADP + H(+). Its function is as follows. Bifunctional enzyme which can phosphorylate or dephosphorylate isocitrate dehydrogenase (IDH) on a specific serine residue. This is a regulatory mechanism which enables bacteria to bypass the Krebs cycle via the glyoxylate shunt in response to the source of carbon. When bacteria are grown on glucose, IDH is fully active and unphosphorylated, but when grown on acetate or ethanol, the activity of IDH declines drastically concomitant with its phosphorylation. This is Isocitrate dehydrogenase kinase/phosphatase from Colwellia psychrerythraea (strain 34H / ATCC BAA-681) (Vibrio psychroerythus).